Reading from the N-terminus, the 113-residue chain is UPF0060 membrane protein Mmcs_2513 (113 aa).

A run of 4 helical transmembrane segments spans residues 12 to 32 (ALFV…WQGV), 37 to 57 (GWIW…VAAF), 66 to 86 (ILAA…VVVD), and 92 to 112 (RWDL…MYAP).

This sequence belongs to the UPF0060 family.

The protein resides in the cell membrane. This Mycobacterium sp. (strain MCS) protein is UPF0060 membrane protein Mmcs_2513.